The sequence spans 418 residues: Gamma-glutamyl phosphate reductase (418 aa).

It belongs to the gamma-glutamyl phosphate reductase family.

Its subcellular location is the cytoplasm. It carries out the reaction L-glutamate 5-semialdehyde + phosphate + NADP(+) = L-glutamyl 5-phosphate + NADPH + H(+). The protein operates within amino-acid biosynthesis; L-proline biosynthesis; L-glutamate 5-semialdehyde from L-glutamate: step 2/2. Its function is as follows. Catalyzes the NADPH-dependent reduction of L-glutamate 5-phosphate into L-glutamate 5-semialdehyde and phosphate. The product spontaneously undergoes cyclization to form 1-pyrroline-5-carboxylate. In Pelobacter propionicus (strain DSM 2379 / NBRC 103807 / OttBd1), this protein is Gamma-glutamyl phosphate reductase.